We begin with the raw amino-acid sequence, 123 residues long: Large ribosomal subunit protein uL14 (123 aa).

The protein belongs to the universal ribosomal protein uL14 family. As to quaternary structure, part of the 50S ribosomal subunit. Forms a cluster with proteins L3 and L19. In the 70S ribosome, L14 and L19 interact and together make contacts with the 16S rRNA in bridges B5 and B8.

Its function is as follows. Binds to 23S rRNA. Forms part of two intersubunit bridges in the 70S ribosome. This is Large ribosomal subunit protein uL14 from Proteus mirabilis (strain HI4320).